An 824-amino-acid chain; its full sequence is Probable ion channel POLLUX (824 aa).

Low complexity predominate over residues 45 to 54; that stretch reads DGDDSSNLPT. The segment at 45-70 is disordered; that stretch reads DGDDSSNLPTVPNPEEKPVPVPSQSP. Helical transmembrane passes span 81–101, 135–155, 198–218, and 250–270; these read FSLTHCLKFICSCSFTYVMFL, AVVFFSVIITFVLPFLLYMYL, LALLLATVVLIVYGGLALYAV, and IVSVAISAGGMLIFATMLGLI. 2 consecutive RCK N-terminal domains span residues 291-432 and 550-699; these read SNHI…ETVV and PEKI…DKSI. A coiled-coil region spans residues 325 to 346; that stretch reads LAERDKEEMETDIAKFEFDLMG.

It belongs to the castor/pollux (TC 1.A.1.23) family.

Its subcellular location is the nucleus membrane. In Arabidopsis thaliana (Mouse-ear cress), this protein is Probable ion channel POLLUX.